A 304-amino-acid polypeptide reads, in one-letter code: Coenzyme PQQ synthesis protein B (304 aa).

This sequence belongs to the PqqB family.

It functions in the pathway cofactor biosynthesis; pyrroloquinoline quinone biosynthesis. In terms of biological role, may be involved in the transport of PQQ or its precursor to the periplasm. The polypeptide is Coenzyme PQQ synthesis protein B (Stutzerimonas stutzeri (Pseudomonas stutzeri)).